Here is a 65-residue protein sequence, read N- to C-terminus: U15-hexatoxin-Mg1b (65 aa).

In terms of processing, contains 4 disulfide bonds. As to expression, expressed by the venom gland.

It localises to the secreted. In vivo, intrathorax injection into crickets causes death. This chain is U15-hexatoxin-Mg1b, found in Macrothele gigas (Japanese funnel web spider).